The following is a 188-amino-acid chain: dCTP deaminase (188 aa).

DCTP contacts are provided by residues Lys111–Arg116, Thr135–Glu137, Gln156, Tyr170, and Gln180. Glu137 functions as the Proton donor/acceptor in the catalytic mechanism.

This sequence belongs to the dCTP deaminase family. In terms of assembly, homotrimer.

It carries out the reaction dCTP + H2O + H(+) = dUTP + NH4(+). It functions in the pathway pyrimidine metabolism; dUMP biosynthesis; dUMP from dCTP (dUTP route): step 1/2. In terms of biological role, catalyzes the deamination of dCTP to dUTP. This Pseudomonas fluorescens (strain SBW25) protein is dCTP deaminase.